A 137-amino-acid polypeptide reads, in one-letter code: Small ribosomal subunit protein uS12 (137 aa).

Residues 1–55 (MPTINQLVRKPRKSKTKQSDSPALNRGFNSKKKQFTNLNSPQKRGVCTRVGTMTP) form a disordered region. The residue at position 102 (D102) is a 3-methylthioaspartic acid. Residues 118–137 (SGVDGRRQGRSLYGTKKPKN) form a disordered region.

This sequence belongs to the universal ribosomal protein uS12 family. Part of the 30S ribosomal subunit. Contacts proteins S8 and S17. May interact with IF1 in the 30S initiation complex.

Functionally, with S4 and S5 plays an important role in translational accuracy. Interacts with and stabilizes bases of the 16S rRNA that are involved in tRNA selection in the A site and with the mRNA backbone. Located at the interface of the 30S and 50S subunits, it traverses the body of the 30S subunit contacting proteins on the other side and probably holding the rRNA structure together. The combined cluster of proteins S8, S12 and S17 appears to hold together the shoulder and platform of the 30S subunit. The polypeptide is Small ribosomal subunit protein uS12 (Staphylococcus epidermidis (strain ATCC 35984 / DSM 28319 / BCRC 17069 / CCUG 31568 / BM 3577 / RP62A)).